Here is a 358-residue protein sequence, read N- to C-terminus: Chorismate synthase (358 aa).

Positions 46 and 52 each coordinate NADP(+). FMN contacts are provided by residues 123–125, 239–240, Gly283, 298–302, and Arg324; these read RSS, NA, and KSVAT.

This sequence belongs to the chorismate synthase family. Homotetramer. FMNH2 is required as a cofactor.

It carries out the reaction 5-O-(1-carboxyvinyl)-3-phosphoshikimate = chorismate + phosphate. It participates in metabolic intermediate biosynthesis; chorismate biosynthesis; chorismate from D-erythrose 4-phosphate and phosphoenolpyruvate: step 7/7. Functionally, catalyzes the anti-1,4-elimination of the C-3 phosphate and the C-6 proR hydrogen from 5-enolpyruvylshikimate-3-phosphate (EPSP) to yield chorismate, which is the branch point compound that serves as the starting substrate for the three terminal pathways of aromatic amino acid biosynthesis. This reaction introduces a second double bond into the aromatic ring system. The sequence is that of Chorismate synthase from Parabacteroides distasonis (strain ATCC 8503 / DSM 20701 / CIP 104284 / JCM 5825 / NCTC 11152).